We begin with the raw amino-acid sequence, 591 residues long: MAVAPLRGALLLWQLLAAGGAALEIGRFDPERGRGAAPCQAVEIPMCRGIGYNLTRMPNLLGHTSQGEAAAELAEFAPLVQYGCHSHLRFFLCSLYAPMCTDQVSTPIPACRPMCEQARLRCAPIMEQFNFGWPDSLDCARLPTRNDPHALCMEAPENATAGPAEPHKGLGMLPVAPRPARPPGDLGPGAGGSGTCENPEKFQYVEKSRSCAPRCGPGVEVFWSRRDKDFALVWMAVWSALCFFSTAFTVLTFLLEPHRFQYPERPIIFLSMCYNVYSLAFLIRAVAGAQSVACDQEAGALYVIQEGLENTGCTLVFLLLYYFGMASSLWWVVLTLTWFLAAGKKWGHEAIEAHGSYFHMAAWGLPALKTIVILTLRKVAGDELTGLCYVASTDAAALTGFVLVPLSGYLVLGSSFLLTGFVALFHIRKIMKTGGTNTEKLEKLMVKIGVFSILYTVPATCVIVCYVYERLNMDFWRLRATEQPCAAAAGPGGRRDCSLPGGSVPTVAVFMLKIFMSLVVGITSGVWVWSSKTFQTWQSLCYRKIAAGRARAKACRAPGSYGRGTHCHYKAPTVVLHMTKTDPSLENPTHL.

A signal peptide spans 1-22 (MAVAPLRGALLLWQLLAAGGAA). At 23 to 229 (LEIGRFDPER…EVFWSRRDKD (207 aa)) the chain is on the extracellular side. In terms of domain architecture, FZ spans 34–155 (RGAAPCQAVE…NDPHALCMEA (122 aa)). Disulfide bonds link cysteine 39–cysteine 100, cysteine 47–cysteine 93, cysteine 84–cysteine 122, cysteine 111–cysteine 152, and cysteine 115–cysteine 139. N-linked (GlcNAc...) asparagine glycosylation is present at asparagine 53. Residues 58-172 (PNLLGHTSQG…PAEPHKGLGM (115 aa)) form a required for Wnt-activated receptor activity region. N-linked (GlcNAc...) asparagine glycosylation is present at asparagine 158. The helical transmembrane segment at 230-250 (FALVWMAVWSALCFFSTAFTV) threads the bilayer. The Cytoplasmic segment spans residues 251 to 266 (LTFLLEPHRFQYPERP). Residues 267–287 (IIFLSMCYNVYSLAFLIRAVA) form a helical membrane-spanning segment. The Extracellular portion of the chain corresponds to 288–315 (GAQSVACDQEAGALYVIQEGLENTGCTL). The helical transmembrane segment at 316-336 (VFLLLYYFGMASSLWWVVLTL) threads the bilayer. The Cytoplasmic portion of the chain corresponds to 337-355 (TWFLAAGKKWGHEAIEAHG). A helical transmembrane segment spans residues 356–376 (SYFHMAAWGLPALKTIVILTL). Residues 377–400 (RKVAGDELTGLCYVASTDAAALTG) lie on the Extracellular side of the membrane. Residues 401–421 (FVLVPLSGYLVLGSSFLLTGF) traverse the membrane as a helical segment. Over 422-447 (VALFHIRKIMKTGGTNTEKLEKLMVK) the chain is Cytoplasmic. A helical transmembrane segment spans residues 448 to 468 (IGVFSILYTVPATCVIVCYVY). The Extracellular portion of the chain corresponds to 469-508 (ERLNMDFWRLRATEQPCAAAAGPGGRRDCSLPGGSVPTVA). The chain crosses the membrane as a helical span at residues 509 to 529 (VFMLKIFMSLVVGITSGVWVW). Over 530–591 (SSKTFQTWQS…DPSLENPTHL (62 aa)) the chain is Cytoplasmic. The Lys-Thr-X-X-X-Trp motif, mediates interaction with the PDZ domain of Dvl family members motif lies at 532 to 537 (KTFQTW). The tract at residues 554–591 (ACRAPGSYGRGTHCHYKAPTVVLHMTKTDPSLENPTHL) is required for CTNNB1 accumulation and TCF transcription factor activity.

Belongs to the G-protein coupled receptor Fz/Smo family. In terms of processing, ubiquitinated by ZNRF3, leading to its degradation by the proteasome. Expressed predominantly in adult and fetal brain, testis, eye, skeletal muscle and kidney. Moderately expressed in pancreas, thyroid, adrenal cortex, small intestine and stomach. Detected in fetal liver and kidney. Expressed in neural progenitor cells.

It is found in the cell membrane. In terms of biological role, receptor for WNT2 that is coupled to the beta-catenin canonical signaling pathway, which leads to the activation of disheveled proteins, inhibition of GSK-3 kinase, nuclear accumulation of beta-catenin and activation of Wnt target genes. Plays a role in neuromuscular junction (NMJ) assembly by negatively regulating the clustering of acetylcholine receptors (AChR) through the beta-catenin canonical signaling pathway. May play a role in neural progenitor cells (NPCs) viability through the beta-catenin canonical signaling pathway by negatively regulating cell cycle arrest leading to inhibition of neuron apoptotic process. During hippocampal development, regulates neuroblast proliferation and apoptotic cell death. Controls bone formation through non canonical Wnt signaling mediated via ISG15. Positively regulates bone regeneration through non canonical Wnt signaling. This chain is Frizzled-9 (FZD9), found in Homo sapiens (Human).